Here is a 597-residue protein sequence, read N- to C-terminus: NADH-quinone oxidoreductase subunit C/D (597 aa).

An NADH dehydrogenase I subunit C region spans residues 1 to 187 (MIDENKKKNT…ESFFLDEQKE (187 aa)). The tract at residues 211–597 (DFMFLNLGPN…IDFVMSDVDR (387 aa)) is NADH dehydrogenase I subunit D.

In the N-terminal section; belongs to the complex I 30 kDa subunit family. The protein in the C-terminal section; belongs to the complex I 49 kDa subunit family. As to quaternary structure, NDH-1 is composed of 13 different subunits. Subunits NuoB, CD, E, F, and G constitute the peripheral sector of the complex.

Its subcellular location is the cell inner membrane. The enzyme catalyses a quinone + NADH + 5 H(+)(in) = a quinol + NAD(+) + 4 H(+)(out). Its function is as follows. NDH-1 shuttles electrons from NADH, via FMN and iron-sulfur (Fe-S) centers, to quinones in the respiratory chain. The immediate electron acceptor for the enzyme in this species is believed to be ubiquinone. Couples the redox reaction to proton translocation (for every two electrons transferred, four hydrogen ions are translocated across the cytoplasmic membrane), and thus conserves the redox energy in a proton gradient. This chain is NADH-quinone oxidoreductase subunit C/D, found in Buchnera aphidicola subsp. Schizaphis graminum (strain Sg).